A 429-amino-acid polypeptide reads, in one-letter code: Histidinol dehydrogenase (429 aa).

Tyrosine 130, glutamine 191, and asparagine 214 together coordinate NAD(+). Serine 237, glutamine 259, and histidine 262 together coordinate substrate. Glutamine 259 and histidine 262 together coordinate Zn(2+). Catalysis depends on proton acceptor residues glutamate 327 and histidine 328. The substrate site is built by histidine 328, aspartate 361, glutamate 415, and histidine 420. Residue aspartate 361 coordinates Zn(2+). Histidine 420 is a binding site for Zn(2+).

It belongs to the histidinol dehydrogenase family. It depends on Zn(2+) as a cofactor.

It catalyses the reaction L-histidinol + 2 NAD(+) + H2O = L-histidine + 2 NADH + 3 H(+). It functions in the pathway amino-acid biosynthesis; L-histidine biosynthesis; L-histidine from 5-phospho-alpha-D-ribose 1-diphosphate: step 9/9. In terms of biological role, catalyzes the sequential NAD-dependent oxidations of L-histidinol to L-histidinaldehyde and then to L-histidine. This is Histidinol dehydrogenase from Neisseria meningitidis serogroup A / serotype 4A (strain DSM 15465 / Z2491).